Consider the following 85-residue polypeptide: Cell division topological specificity factor (85 aa).

Belongs to the MinE family.

Functionally, prevents the cell division inhibition by proteins MinC and MinD at internal division sites while permitting inhibition at polar sites. This ensures cell division at the proper site by restricting the formation of a division septum at the midpoint of the long axis of the cell. The chain is Cell division topological specificity factor from Shewanella baltica (strain OS223).